Here is a 972-residue protein sequence, read N- to C-terminus: Translation initiation factor IF-2 (972 aa).

Residues 49-63 (HLRKSHGATDGDKRK) show a composition bias toward basic and acidic residues. Disordered regions lie at residues 49–86 (HLRK…ARTI) and 100–383 (DDVA…TFQA). The segment covering 105 to 114 (GAEQGQAQVA) has biased composition (low complexity). Residues 121–177 (ELKRREEEARREAELLEKQAQELRERQERLEREEAERRAREEAAEAERRRAEEEAAA) show a composition bias toward basic and acidic residues. Low complexity predominate over residues 178 to 209 (KRAAAAAVEAQQAAAQQAAEAQQETAGAQSAQ). A compositionally biased stretch (basic and acidic residues) spans 210-261 (DEARAAAERAAQREAAKKAEDAAREAADKTRAEQEEIRKRREAAEAEARAIR). Residues 277–286 (PPKPVEPPKP) show a composition bias toward pro residues. Residues 298–327 (KPAGAGAARPAVKKPAGAAPATTQAPAGAG) show a composition bias toward low complexity. A compositionally biased stretch (gly residues) spans 356–369 (SSGGVDRGWRGGPK). The tr-type G domain occupies 472–641 (PRPPVVTVMG…LLQAEVLELK (170 aa)). A G1 region spans residues 481–488 (GHVDHGKT). A GTP-binding site is contributed by 481 to 488 (GHVDHGKT). The tract at residues 506 to 510 (GITQH) is G2. Residues 527–530 (DTPG) form a G3 region. Residues 527-531 (DTPGH) and 581-584 (NKID) each bind GTP. Positions 581–584 (NKID) are G4. The tract at residues 617 to 619 (SAK) is G5.

This sequence belongs to the TRAFAC class translation factor GTPase superfamily. Classic translation factor GTPase family. IF-2 subfamily.

The protein localises to the cytoplasm. Its function is as follows. One of the essential components for the initiation of protein synthesis. Protects formylmethionyl-tRNA from spontaneous hydrolysis and promotes its binding to the 30S ribosomal subunits. Also involved in the hydrolysis of GTP during the formation of the 70S ribosomal complex. This Burkholderia ambifaria (strain MC40-6) protein is Translation initiation factor IF-2.